Reading from the N-terminus, the 522-residue chain is WEB family protein At2g38370 (522 aa).

A disordered region spans residues 1–32 (MAEFPEPGTVNPDSDLSNGRAEKPEIDTSAPF). Coiled-coil stretches lie at residues 77–264 (ELQR…AARE) and 299–376 (ARSA…RSEN). 2 disordered regions span residues 374–397 (SENG…SRRE) and 458–493 (MSLG…RKRK). Residues 473–486 (TVSKRSEGKENEKR) are compositionally biased toward basic and acidic residues.

Belongs to the WEB family.

The protein is WEB family protein At2g38370 of Arabidopsis thaliana (Mouse-ear cress).